The primary structure comprises 515 residues: Maturase K (515 aa).

The protein belongs to the intron maturase 2 family. MatK subfamily.

The protein resides in the plastid. It is found in the chloroplast. In terms of biological role, usually encoded in the trnK tRNA gene intron. Probably assists in splicing its own and other chloroplast group II introns. This is Maturase K from Picea sitchensis (Sitka spruce).